The following is a 172-amino-acid chain: Putative phosphoesterase BC_1225 (172 aa).

H34 serves as the catalytic Proton donor. Short sequence motifs (HXTX) lie at residues 34–37 (HITL) and 115–118 (HLTI). The Proton acceptor role is filled by H115.

Belongs to the 2H phosphoesterase superfamily. YjcG family.

The sequence is that of Putative phosphoesterase BC_1225 from Bacillus cereus (strain ATCC 14579 / DSM 31 / CCUG 7414 / JCM 2152 / NBRC 15305 / NCIMB 9373 / NCTC 2599 / NRRL B-3711).